We begin with the raw amino-acid sequence, 833 residues long: Neurogenic locus protein delta (833 aa).

Positions 1–18 (MHWIKCLLTAFICFTVIV) are cleaved as a signal peptide. The Extracellular segment spans residues 19 to 594 (QVHSSGSFEL…ARADGLTNAQ (576 aa)). Disulfide bonds link Cys-46-Cys-61 and Cys-68-Cys-82. 3 N-linked (GlcNAc...) asparagine glycosylation sites follow: Asn-98, Asn-137, and Asn-167. The region spanning 182–226 (VTCDLNYYGSGCAKFCRPRDDSFGHSTCSETGEIICLTGWQGDYC) is the DSL domain. 30 cysteine pairs are disulfide-bonded: Cys-184–Cys-193, Cys-197–Cys-209, Cys-217–Cys-226, Cys-231–Cys-240, Cys-235–Cys-246, Cys-248–Cys-257, Cys-260–Cys-271, Cys-266–Cys-277, Cys-279–Cys-288, Cys-295–Cys-307, Cys-301–Cys-317, Cys-319–Cys-328, Cys-335–Cys-348, Cys-342–Cys-360, Cys-362–Cys-371, Cys-378–Cys-388, Cys-383–Cys-404, Cys-406–Cys-415, Cys-422–Cys-433, Cys-427–Cys-439, Cys-441–Cys-450, Cys-457–Cys-468, Cys-462–Cys-477, Cys-479–Cys-488, Cys-495–Cys-506, Cys-500–Cys-515, Cys-517–Cys-526, Cys-533–Cys-544, Cys-538–Cys-553, and Cys-555–Cys-564. 6 consecutive EGF-like domains span residues 227 to 258 (HIPK…ALCN), 256 to 289 (LCNE…LYCN), 291 to 329 (DLNY…DDCE), 331 to 372 (EIYS…KMCE), 374 to 416 (KVLT…PNCD), and 418 to 451 (QLDN…TRCE). The 37-residue stretch at 453–489 (NIDDCLGHQCENGGTCIDMVNQYRCQCVPGFHGTHCS) folds into the EGF-like 7; calcium-binding domain. Residues 491 to 527 (KVDLCLIRPCANGGTCLNLNNDYQCTCRAGFTGKDCS) enclose the EGF-like 8 domain. Residues 529 to 565 (DIDECSSGPCHNGGTCMNRVNSFECVCANGFRGKQCD) form the EGF-like 9; calcium-binding domain. A helical membrane pass occupies residues 595–617 (VVLIAVFSVAMPLVAVIAACVVF). The Cytoplasmic segment spans residues 618–833 (CMKRKRKRAQ…RSVVCGTPHM (216 aa)). Residue Thr-666 is modified to Phosphothreonine. Positions 743 to 773 (QLNTDPTLMHRGSPAGSSAKGASGGGPGAAE) are disordered. Residues 754–763 (GSPAGSSAKG) show a composition bias toward low complexity.

Interacts with Notch (N) via the EGF repeats and the N EGF repeats. In terms of processing, ubiquitinated by Mib, leading to its endocytosis and subsequent degradation. Detected in all areas with neurogenic abilities, for example the neurogenic ectoderm and the primordia of the sense organs. Later expression is restricted to those cells that have adopted a neural fate.

It localises to the membrane. In terms of biological role, acts as a ligand for Notch (N) receptor. Essential for proper differentiation of ectoderm. Delta is required for the correct separation of neural and epidermal cell lineages. Fringe (fng) acts in the Golgi to determine the type of O-linked fucose on the EGF modules in N, altering the ability of N to bind with Delta. O-fut1 also has a role in modulating the interaction. This chain is Neurogenic locus protein delta, found in Drosophila melanogaster (Fruit fly).